The primary structure comprises 177 residues: Cytochrome c oxidase assembly protein CtaG (177 aa).

The Cytoplasmic segment spans residues 1 to 8 (MTQKAKNT). A helical; Signal-anchor for type II membrane protein membrane pass occupies residues 9–29 (IYLLILIILSMLCLVYASVPL). Residues 30 to 177 (YSIFCKVTGY…TFFKYKENTK (148 aa)) lie on the Periplasmic side of the membrane.

This sequence belongs to the COX11/CtaG family.

Its subcellular location is the cell inner membrane. In terms of biological role, exerts its effect at some terminal stage of cytochrome c oxidase synthesis, probably by being involved in the insertion of the copper B into subunit I. The polypeptide is Cytochrome c oxidase assembly protein CtaG (Ehrlichia ruminantium (strain Welgevonden)).